A 326-amino-acid polypeptide reads, in one-letter code: Tagatose 1,6-diphosphate aldolase (326 aa).

This sequence belongs to the aldolase LacD family.

The enzyme catalyses D-tagatofuranose 1,6-bisphosphate = D-glyceraldehyde 3-phosphate + dihydroxyacetone phosphate. Its pathway is carbohydrate metabolism; D-tagatose 6-phosphate degradation; D-glyceraldehyde 3-phosphate and glycerone phosphate from D-tagatose 6-phosphate: step 2/2. This is Tagatose 1,6-diphosphate aldolase from Staphylococcus aureus (strain Mu3 / ATCC 700698).